Here is a 358-residue protein sequence, read N- to C-terminus: MNPFPRAEISSSALQTNLAALRQQAPASRVMAVVKANGYGHGLLNVANCLVSADGFGLARLDEALELRAGGVTARLLLLEGFFRATDLPLLVGHDIDTVVHHSSQLEMLEQTVLSKPVTVWLKVDSGMHRLGFTPEQFSTVYDRLMACSNVAKPIHLMTHFACADEPDNTYTSVQMAAFNTLTAGLPGFRTLANSAGALYWPQSQGDWIRPGIALYGVSPVTGDCGANHGLVPAMELVSQLIAVRDHKANQPVGYGCFWTAKQDTRLGVVAIGYGDGYPRNAPEGTPVWVNGRRVPIVGRVSMDMLTVDLGQDAQDKVGDSALLWGKALPVEEVAEHIGTIAYELVTKLTPRVAVCLA.

The active-site Proton acceptor; specific for D-alanine is lysine 35. Lysine 35 is subject to N6-(pyridoxal phosphate)lysine. Arginine 130 lines the substrate pocket. Tyrosine 255 serves as the catalytic Proton acceptor; specific for L-alanine. Methionine 303 contributes to the substrate binding site.

Belongs to the alanine racemase family. It depends on pyridoxal 5'-phosphate as a cofactor.

The enzyme catalyses L-alanine = D-alanine. Its pathway is amino-acid biosynthesis; D-alanine biosynthesis; D-alanine from L-alanine: step 1/1. Its function is as follows. Catalyzes the interconversion of L-alanine and D-alanine. May also act on other amino acids. This Shewanella baltica (strain OS195) protein is Alanine racemase (alr).